Reading from the N-terminus, the 253-residue chain is Sec-independent protein translocase protein TatC (253 aa).

The next 5 membrane-spanning stretches (helical) occupy residues 19–39, 70–90, 109–129, 154–174, and 194–214; these read ILIIVVFFVIALVVGFFLATP, FAFTSAFILVFPIILYQLWAF, IAFFLFLGGLSFAYFILFPFL, FLFQITMPFGVLFQLPVVVMF, and FFVLLVVAGFITPPELISHLM.

The protein belongs to the TatC family. In terms of assembly, forms a complex with TatA.

Its subcellular location is the cell membrane. Part of the twin-arginine translocation (Tat) system that transports large folded proteins containing a characteristic twin-arginine motif in their signal peptide across membranes. This is Sec-independent protein translocase protein TatC from Halalkalibacterium halodurans (strain ATCC BAA-125 / DSM 18197 / FERM 7344 / JCM 9153 / C-125) (Bacillus halodurans).